A 289-amino-acid polypeptide reads, in one-letter code: tRNA acetyltransferase TAN1 (289 aa).

Basic and acidic residues predominate over residues 1 to 10 (MGEKRNRNGK). Disordered regions lie at residues 1–31 (MGEK…DPGT) and 64–83 (DIKE…LSIE). Ser-72 bears the Phosphoserine mark. The THUMP domain occupies 146-259 (ADPKNMVKRT…KSNIGMCVVD (114 aa)).

It is found in the cytoplasm. It localises to the nucleus. Functionally, probable tRNA acetyltransferase required for the formation of the modified nucleoside N(4)-acetylcytidine in serine and leucine tRNAs. Binds RNA. This chain is tRNA acetyltransferase TAN1 (TAN1), found in Saccharomyces cerevisiae (strain ATCC 204508 / S288c) (Baker's yeast).